The following is a 321-amino-acid chain: Probable transaldolase (321 aa).

Residue lysine 133 is the Schiff-base intermediate with substrate of the active site.

The protein belongs to the transaldolase family. Type 1 subfamily. As to quaternary structure, homodimer.

The protein localises to the cytoplasm. The enzyme catalyses D-sedoheptulose 7-phosphate + D-glyceraldehyde 3-phosphate = D-erythrose 4-phosphate + beta-D-fructose 6-phosphate. The protein operates within carbohydrate degradation; pentose phosphate pathway; D-glyceraldehyde 3-phosphate and beta-D-fructose 6-phosphate from D-ribose 5-phosphate and D-xylulose 5-phosphate (non-oxidative stage): step 2/3. Transaldolase is important for the balance of metabolites in the pentose-phosphate pathway. The chain is Probable transaldolase (tal) from Dictyostelium discoideum (Social amoeba).